Reading from the N-terminus, the 126-residue chain is Putative lipoprotein LprD (126 aa).

Residues 1–19 (MSTTRRRRPALVALVTIAA) form the signal peptide. Cys20 carries the N-palmitoyl cysteine lipid modification. Residue Cys20 is the site of S-diacylglycerol cysteine attachment. Residues 44–64 (GYALQWPLFAGFCLYTYHNFV) form a helical membrane-spanning segment.

To M.tuberculosis Rv1343c.

The protein localises to the cell membrane. The polypeptide is Putative lipoprotein LprD (lprD) (Mycobacterium leprae (strain TN)).